A 181-amino-acid polypeptide reads, in one-letter code: Ribulose bisphosphate carboxylase small subunit, chloroplastic (181 aa).

Residues 1–56 (MASISSSAIATVNRTTSTQASLAAPFTGLKSNVAFPVTKKANNDFSSLPSNGGRVQ) constitute a chloroplast transit peptide.

It belongs to the RuBisCO small chain family. As to quaternary structure, heterohexadecamer of 8 large and 8 small subunits.

Its subcellular location is the plastid. It is found in the chloroplast. Functionally, ruBisCO catalyzes two reactions: the carboxylation of D-ribulose 1,5-bisphosphate, the primary event in carbon dioxide fixation, as well as the oxidative fragmentation of the pentose substrate. Both reactions occur simultaneously and in competition at the same active site. Although the small subunit is not catalytic it is essential for maximal activity. The polypeptide is Ribulose bisphosphate carboxylase small subunit, chloroplastic (Lactuca sativa (Garden lettuce)).